The primary structure comprises 129 residues: Glycine cleavage system H protein (129 aa).

In terms of domain architecture, Lipoyl-binding spans Thr24–Lys106. Lys65 is modified (N6-lipoyllysine).

This sequence belongs to the GcvH family. The glycine cleavage system is composed of four proteins: P, T, L and H. The cofactor is (R)-lipoate.

The glycine cleavage system catalyzes the degradation of glycine. The H protein shuttles the methylamine group of glycine from the P protein to the T protein. The polypeptide is Glycine cleavage system H protein (Escherichia coli O45:K1 (strain S88 / ExPEC)).